We begin with the raw amino-acid sequence, 290 residues long: GTPase Era (290 aa).

Residues 2 to 169 form the Era-type G domain; it reads KSGFVSIIGR…KDKIYANLQE (168 aa). The interval 10–17 is G1; that stretch reads GRPSTGKS. Residue 10–17 participates in GTP binding; the sequence is GRPSTGKS. A G2 region spans residues 36 to 40; the sequence is QTTRN. The G3 stretch occupies residues 57-60; that stretch reads DTPG. Residues 57–61 and 119–122 each bind GTP; these read DTPGF and NKID. Residues 119-122 form a G4 region; sequence NKID. Residues 148-150 are G5; that stretch reads ISA. In terms of domain architecture, KH type-2 spans 200–276; the sequence is LKEELPYSLY…DLFLQVKLRK (77 aa).

It belongs to the TRAFAC class TrmE-Era-EngA-EngB-Septin-like GTPase superfamily. Era GTPase family. As to quaternary structure, monomer.

The protein localises to the cytoplasm. It is found in the cell inner membrane. An essential GTPase that binds both GDP and GTP, with rapid nucleotide exchange. Plays a role in 16S rRNA processing and 30S ribosomal subunit biogenesis and possibly also in cell cycle regulation and energy metabolism. The sequence is that of GTPase Era from Borrelia hermsii (strain HS1 / DAH).